The sequence spans 1574 residues: Centrosomal protein of 170 kDa protein B (1574 aa).

Residues 23–73 enclose the FHA domain; the sequence is IFVGRDECELMLQSRSVDKQHAVINYDQDRDEHWVKDLGSLNGTFVNDVRI. Disordered regions lie at residues 121–258, 316–395, and 409–578; these read VSVK…GVGG, DWLV…RDPQ, and FDGD…QDQE. 3 stretches are compositionally biased toward basic and acidic residues: residues 147 to 157, 182 to 197, and 325 to 344; these read RPEKGDRRHGA, SEDR…RPKD, and LLRR…DLPV. Phosphoserine is present on serine 360. Over residues 370–382 the composition is skewed to low complexity; it reads ASVSGASAEASGE. Serine 421 carries the phosphoserine modification. Over residues 430–446 the composition is skewed to basic and acidic residues; the sequence is PKADKRRGPGTSDRDRP. The span at 452–463 shows a compositional bias: polar residues; sequence ATGSSSGPQRAS. Positions 465–474 are enriched in basic and acidic residues; it reads LKREKTEERL. A compositionally biased stretch (polar residues) spans 475–488; sequence GNTSPVPRASTRSF. Phosphoserine is present on residues serine 478 and serine 490. Residues 518 to 528 are compositionally biased toward pro residues; the sequence is EKTPPVLPAPL. Position 534 is a phosphoserine (serine 534). Residues threonine 540 and threonine 541 each carry the phosphothreonine modification. Phosphoserine occurs at positions 595, 617, 653, 709, 744, 746, 749, 751, 819, and 843. Disordered stretches follow at residues 637–826, 839–882, 924–1300, 1333–1358, 1377–1407, and 1510–1535; these read PGMA…RDGL, RSGR…HISS, SKSA…DPYG, AGDG…NTPA, NFQK…TNKT, and NRAP…TSPA. Residues 857 to 867 show a composition bias toward polar residues; it reads FARQESFTKEP. Phosphoserine is present on serine 947. Residues 950 to 959 show a composition bias toward polar residues; sequence DTASTISLLS. Serine 965 and serine 981 each carry phosphoserine. The span at 996–1005 shows a compositional bias: basic and acidic residues; the sequence is ARERMSERQH. The segment covering 1084 to 1102 has biased composition (polar residues); that stretch reads RSSATAQKVQQALTRSNSL. Phosphoserine is present on serine 1122. Residues 1134 to 1146 show a composition bias toward low complexity; sequence AANPEPANRAAPE. 2 positions are modified to phosphoserine: serine 1166 and serine 1186. A compositionally biased stretch (low complexity) spans 1199-1213; that stretch reads AEARAAAKKAAATAA. Over residues 1265 to 1282 the composition is skewed to polar residues; that stretch reads HASTATQTPRGSSSTRAR. The residue at position 1289 (threonine 1289) is a Phosphothreonine. Residue serine 1341 is modified to Phosphoserine. 2 stretches are compositionally biased toward polar residues: residues 1344–1358 and 1385–1396; these read PTRS…NTPA and SMNSHNLDQNMN. Residue threonine 1345 is modified to Phosphothreonine. A Phosphoserine modification is found at serine 1347. Phosphoserine occurs at positions 1530 and 1533.

Belongs to the CEP170 family.

It is found in the cytoplasm. Its subcellular location is the cytoskeleton. Plays a role in microtubule organization. This chain is Centrosomal protein of 170 kDa protein B (Cep170b), found in Mus musculus (Mouse).